Reading from the N-terminus, the 506-residue chain is Lysine--tRNA ligase (506 aa).

2 residues coordinate Mg(2+): glutamate 416 and glutamate 423.

The protein belongs to the class-II aminoacyl-tRNA synthetase family. In terms of assembly, homodimer. The cofactor is Mg(2+).

It localises to the cytoplasm. It catalyses the reaction tRNA(Lys) + L-lysine + ATP = L-lysyl-tRNA(Lys) + AMP + diphosphate. This chain is Lysine--tRNA ligase, found in Sodalis glossinidius (strain morsitans).